Reading from the N-terminus, the 40-residue chain is Large ribosomal subunit protein bL36A (40 aa).

The protein belongs to the bacterial ribosomal protein bL36 family.

This Paenarthrobacter aurescens (strain TC1) protein is Large ribosomal subunit protein bL36A.